The sequence spans 197 residues: Holliday junction branch migration complex subunit RuvA (197 aa).

The domain I stretch occupies residues 1 to 64 (MIGRISGLLL…EDAHLLFGFA (64 aa)). The segment at 65–142 (TEGERQAFRQ…DLGVSAIPGA (78 aa)) is domain II. Positions 143–153 (AGARRPSTMGS) are flexible linker. The segment at 153–197 (SDVLNALLSLGYNDREANWAVSQLSVDLSVSDGIRQALKFLSKEK) is domain III.

This sequence belongs to the RuvA family. As to quaternary structure, homotetramer. Forms an RuvA(8)-RuvB(12)-Holliday junction (HJ) complex. HJ DNA is sandwiched between 2 RuvA tetramers; dsDNA enters through RuvA and exits via RuvB. An RuvB hexamer assembles on each DNA strand where it exits the tetramer. Each RuvB hexamer is contacted by two RuvA subunits (via domain III) on 2 adjacent RuvB subunits; this complex drives branch migration. In the full resolvosome a probable DNA-RuvA(4)-RuvB(12)-RuvC(2) complex forms which resolves the HJ.

The protein resides in the cytoplasm. In terms of biological role, the RuvA-RuvB-RuvC complex processes Holliday junction (HJ) DNA during genetic recombination and DNA repair, while the RuvA-RuvB complex plays an important role in the rescue of blocked DNA replication forks via replication fork reversal (RFR). RuvA specifically binds to HJ cruciform DNA, conferring on it an open structure. The RuvB hexamer acts as an ATP-dependent pump, pulling dsDNA into and through the RuvAB complex. HJ branch migration allows RuvC to scan DNA until it finds its consensus sequence, where it cleaves and resolves the cruciform DNA. The polypeptide is Holliday junction branch migration complex subunit RuvA (Nitrosospira multiformis (strain ATCC 25196 / NCIMB 11849 / C 71)).